Consider the following 75-residue polypeptide: Small ribosomal subunit protein bS16 (75 aa).

This sequence belongs to the bacterial ribosomal protein bS16 family.

This chain is Small ribosomal subunit protein bS16, found in Campylobacter fetus subsp. fetus (strain 82-40).